Here is a 442-residue protein sequence, read N- to C-terminus: tRNA modification GTPase MnmE (442 aa).

(6S)-5-formyl-5,6,7,8-tetrahydrofolate contacts are provided by R23, E82, and K121. Residues 215–364 form the TrmE-type G domain; the sequence is GTSLILAGKP…VKQALIQWMQ (150 aa). N225 contributes to the K(+) binding site. Residues 225–230, 244–250, 269–272, and 325–328 each bind GTP; these read NVGKSS, THIPGTT, DTAG, and NKAD. S229 provides a ligand contact to Mg(2+). T244, I246, and T249 together coordinate K(+). Residue T250 coordinates Mg(2+). K442 is a binding site for (6S)-5-formyl-5,6,7,8-tetrahydrofolate.

It belongs to the TRAFAC class TrmE-Era-EngA-EngB-Septin-like GTPase superfamily. TrmE GTPase family. As to quaternary structure, homodimer. Heterotetramer of two MnmE and two MnmG subunits. The cofactor is K(+).

The protein resides in the cytoplasm. Functionally, exhibits a very high intrinsic GTPase hydrolysis rate. Involved in the addition of a carboxymethylaminomethyl (cmnm) group at the wobble position (U34) of certain tRNAs, forming tRNA-cmnm(5)s(2)U34. This is tRNA modification GTPase MnmE from Chlamydia pneumoniae (Chlamydophila pneumoniae).